Here is a 550-residue protein sequence, read N- to C-terminus: Arginine--tRNA ligase (550 aa).

A 'HIGH' region motif is present at residues 130 to 140 (ANPTGPIHIGG).

It belongs to the class-I aminoacyl-tRNA synthetase family. As to quaternary structure, monomer.

It is found in the cytoplasm. The enzyme catalyses tRNA(Arg) + L-arginine + ATP = L-arginyl-tRNA(Arg) + AMP + diphosphate. The polypeptide is Arginine--tRNA ligase (argS) (Mycobacterium tuberculosis (strain CDC 1551 / Oshkosh)).